A 57-amino-acid polypeptide reads, in one-letter code: Metallothionein (57 aa).

It belongs to the metallothionein superfamily. Type 14 family.

In terms of biological role, this protein complexes cadmium, zinc and copper. This Thermostichus vulcanus (Synechococcus vulcanus) protein is Metallothionein (mtnA).